A 340-amino-acid chain; its full sequence is Very-long-chain 3-oxoacyl-CoA reductase (340 aa).

A helical membrane pass occupies residues 23-43 (LQYTFAALGALYVLRGALSFV). The NADP(+) site is built by valine 68, arginine 109, aspartate 123, aspartate 131, asparagine 150, lysine 185, tyrosine 217, lysine 221, valine 250, and threonine 252. The Proton donor role is filled by tyrosine 217. Residue lysine 221 is the Lowers pKa of active site Tyr of the active site.

This sequence belongs to the short-chain dehydrogenases/reductases (SDR) family.

The protein localises to the endoplasmic reticulum membrane. It carries out the reaction a very-long-chain (3R)-3-hydroxyacyl-CoA + NADP(+) = a very-long-chain 3-oxoacyl-CoA + NADPH + H(+). The protein operates within lipid metabolism; fatty acid biosynthesis. Functionally, component of the microsomal membrane bound fatty acid elongation system, which produces the 26-carbon very long-chain fatty acids (VLCFA) from palmitate. Catalyzes the reduction of the 3-ketoacyl-CoA intermediate that is formed in each cycle of fatty acid elongation. VLCFAs serve as precursors for ceramide and sphingolipids. This chain is Very-long-chain 3-oxoacyl-CoA reductase, found in Podospora anserina (strain S / ATCC MYA-4624 / DSM 980 / FGSC 10383) (Pleurage anserina).